The sequence spans 167 residues: Interferon gamma (167 aa).

The signal sequence occupies residues 1-23; it reads MNYTGYLLAFQLCIILGSSSCYC. Position 24 is a pyrrolidone carboxylic acid (Gln24). Asn39 and Asn105 each carry an N-linked (GlcNAc...) asparagine glycan. The tract at residues 148–167 is disordered; that stretch reads SNLRKRKRSQSTFHGRRASI. The segment covering 149–167 has biased composition (basic residues); sequence NLRKRKRSQSTFHGRRASI.

This sequence belongs to the type II (or gamma) interferon family. Homodimer. Interacts with IFNGR1 (via extracellular domain); this interaction promotes IFNGR1 dimerization. Released primarily from activated T lymphocytes.

The protein localises to the secreted. Functionally, type II interferon produced by immune cells such as T-cells and NK cells that plays crucial roles in antimicrobial, antiviral, and antitumor responses by activating effector immune cells and enhancing antigen presentation. Primarily signals through the JAK-STAT pathway after interaction with its receptor IFNGR1 to affect gene regulation. Upon IFNG binding, IFNGR1 intracellular domain opens out to allow association of downstream signaling components JAK2, JAK1 and STAT1, leading to STAT1 activation, nuclear translocation and transcription of IFNG-regulated genes. Many of the induced genes are transcription factors such as IRF1 that are able to further drive regulation of a next wave of transcription. Plays a role in class I antigen presentation pathway by inducing a replacement of catalytic proteasome subunits with immunoproteasome subunits. In turn, increases the quantity, quality, and repertoire of peptides for class I MHC loading. Increases the efficiency of peptide generation also by inducing the expression of activator PA28 that associates with the proteasome and alters its proteolytic cleavage preference. Up-regulates as well MHC II complexes on the cell surface by promoting expression of several key molecules such as cathepsins B/CTSB, H/CTSH, and L/CTSL. Participates in the regulation of hematopoietic stem cells during development and under homeostatic conditions by affecting their development, quiescence, and differentiation. The chain is Interferon gamma (IFNG) from Dasypus novemcinctus (Nine-banded armadillo).